A 213-amino-acid polypeptide reads, in one-letter code: Probable nicotinate-nucleotide adenylyltransferase (213 aa).

This sequence belongs to the NadD family.

It catalyses the reaction nicotinate beta-D-ribonucleotide + ATP + H(+) = deamido-NAD(+) + diphosphate. The protein operates within cofactor biosynthesis; NAD(+) biosynthesis; deamido-NAD(+) from nicotinate D-ribonucleotide: step 1/1. In terms of biological role, catalyzes the reversible adenylation of nicotinate mononucleotide (NaMN) to nicotinic acid adenine dinucleotide (NaAD). The polypeptide is Probable nicotinate-nucleotide adenylyltransferase (Escherichia coli O45:K1 (strain S88 / ExPEC)).